The primary structure comprises 156 residues: Small ribosomal subunit protein uS7 (156 aa).

Belongs to the universal ribosomal protein uS7 family. As to quaternary structure, part of the 30S ribosomal subunit. Contacts proteins S9 and S11.

In terms of biological role, one of the primary rRNA binding proteins, it binds directly to 16S rRNA where it nucleates assembly of the head domain of the 30S subunit. Is located at the subunit interface close to the decoding center, probably blocks exit of the E-site tRNA. This chain is Small ribosomal subunit protein uS7, found in Corynebacterium jeikeium (strain K411).